Reading from the N-terminus, the 92-residue chain is MSREQAFEMLIKILCKTDSTDDMKLILECILTRSEMEDLIDRIRIYNELLNTSNSQREVASKLGVSITKITRGAANLQDNNIKDFLRKKISY.

Residues 56–79 (QREVASKLGVSITKITRGAANLQD) mediate DNA binding.

It belongs to the TrpR family. Homodimer.

It localises to the cytoplasm. Its function is as follows. This protein is an aporepressor. When complexed with L-tryptophan it binds the operator region of the trp operon and prevents the initiation of transcription. This Xylella fastidiosa (strain M23) protein is Trp operon repressor homolog.